A 324-amino-acid chain; its full sequence is Putative ribose-phosphate pyrophosphokinase 1 (324 aa).

Residues 43–45 (DGE) and 102–103 (RQ) contribute to the ATP site. His-136 contacts Mg(2+). Residues Asp-225 and 229-233 (NTGQT) contribute to the D-ribose 5-phosphate site.

Belongs to the ribose-phosphate pyrophosphokinase family. Class I subfamily. Homohexamer. The cofactor is Mg(2+).

The protein localises to the cytoplasm. The catalysed reaction is D-ribose 5-phosphate + ATP = 5-phospho-alpha-D-ribose 1-diphosphate + AMP + H(+). It participates in metabolic intermediate biosynthesis; 5-phospho-alpha-D-ribose 1-diphosphate biosynthesis; 5-phospho-alpha-D-ribose 1-diphosphate from D-ribose 5-phosphate (route I): step 1/1. Involved in the biosynthesis of the central metabolite phospho-alpha-D-ribosyl-1-pyrophosphate (PRPP) via the transfer of pyrophosphoryl group from ATP to 1-hydroxyl of ribose-5-phosphate (Rib-5-P). In Enterococcus faecalis (strain ATCC 700802 / V583), this protein is Putative ribose-phosphate pyrophosphokinase 1.